Consider the following 79-residue polypeptide: Conotoxin VnMEKL-024 (79 aa).

The N-terminal stretch at M1 to A19 is a signal peptide. Residues L20–E50 constitute a propeptide that is removed on maturation. 3 disulfides stabilise this stretch: C51–C65, C58–C69, and C64–C76.

The protein belongs to the conotoxin O2 superfamily. As to expression, expressed by the venom duct.

The protein resides in the secreted. The polypeptide is Conotoxin VnMEKL-024 (Conus ventricosus (Mediterranean cone)).